The primary structure comprises 368 residues: Inner kinetochore subunit MCM21 (368 aa).

Positions 1-43 (MSRIDDLQQDIESLLSEINSLEESREKLKAKIKDKRKNEESAN) form a coiled coil. T88 is subject to Phosphothreonine.

Belongs to the CENP-O/MCM21 family. In terms of assembly, component of the heterotetrameric kinetochore subcomplex COMA, which consists of AME1, CTF19, MCM21 and OKP1. The COMA subcomplex is part of a larger constitutive centromere-associated network (CCAN) (also known as central kinetochore CTF19 complex in yeast), which is composed of at least AME1, CHL4, CNN1, CTF3, CTF19, IML3, MCM16, MCM21, MCM22, MHF1, MHF2, MIF2, NKP1, NKP2, OKP1 and WIP1. COMA binds the centromeric nucleosome-binding protein MIF2, and to the outer kinetochore MIND subcomplex.

The protein localises to the nucleus. It is found in the chromosome. It localises to the centromere. The protein resides in the kinetochore. Its function is as follows. Component of the kinetochore, a multiprotein complex that assembles on centromeric DNA and attaches chromosomes to spindle microtubules, mediating chromosome segregation and sister chromatid segregation during meiosis and mitosis. Component of the inner kinetochore COMA complex, which connects centromere-associated proteins and the outer kinetochore. COMA interacts with other inner kinetochore proteins to form the inner kinetochore constitutive centromere-associated network (CCAN), which serves as a structural platform for outer kinetochore assembly. This Saccharomyces cerevisiae (strain ATCC 204508 / S288c) (Baker's yeast) protein is Inner kinetochore subunit MCM21 (MCM21).